A 554-amino-acid chain; its full sequence is RecBCD enzyme subunit RecD (554 aa).

155 to 162 contributes to the ATP binding site; that stretch reads GGPGTGKT.

The protein belongs to the RecD family. In terms of assembly, heterotrimer of RecB, RecC and RecD. All subunits contribute to DNA-binding.

The catalysed reaction is Couples ATP hydrolysis with the unwinding of duplex DNA at the replication fork by translocating in the 5'-3' direction. This creates two antiparallel DNA single strands (ssDNA). The leading ssDNA polymer is the template for DNA polymerase III holoenzyme which synthesizes a continuous strand.. It carries out the reaction ATP + H2O = ADP + phosphate + H(+). In terms of biological role, a helicase/nuclease that prepares dsDNA breaks (DSB) for recombinational DNA repair. Binds to DSBs and unwinds DNA via a highly rapid and processive ATP-dependent bidirectional helicase activity. Holoenzyme degrades any linearized DNA that is unable to undergo homologous recombination. In the holoenzyme this subunit has ssDNA-dependent ATPase and 5'-3' helicase activity. When added to pre-assembled RecBC greatly stimulates nuclease activity and augments holoenzyme processivity. Unlike the case in E.coli, suppresses RecA-dependent homologous recombination, is instead required for single-strand annealing pathway repair of DSB. The sequence is that of RecBCD enzyme subunit RecD from Mycolicibacterium smegmatis (strain ATCC 700084 / mc(2)155) (Mycobacterium smegmatis).